Reading from the N-terminus, the 260-residue chain is Dolichol-phosphate mannosyltransferase subunit 1 (260 aa).

The tract at residues 1–20 (MAAEEASRSSPRFRREPKGR) is disordered. Ala-2 is modified (N-acetylalanine). Ser-9 carries the phosphoserine modification. GDP-alpha-D-mannose contacts are provided by Pro-32, Tyr-34, Glu-36, Ile-63, Asp-65, Asp-118, Ala-119, Asp-120, Arg-147, Arg-234, and Lys-240. Asp-120 lines the Mg(2+) pocket. Asp-120 provides a ligand contact to Mn(2+).

This sequence belongs to the glycosyltransferase 2 family. In terms of assembly, component of the dolichol-phosphate mannose (DPM) synthase complex composed of DPM1, DPM2 and DPM3; within the complex, directly interacts with DPM3. This interaction may stabilize DPM1. Requires Mg(2+) as cofactor. It depends on Mn(2+) as a cofactor. The cofactor is Ca(2+).

It localises to the endoplasmic reticulum. The catalysed reaction is a di-trans,poly-cis-dolichyl phosphate + GDP-alpha-D-mannose = a di-trans,poly-cis-dolichyl beta-D-mannosyl phosphate + GDP. It functions in the pathway protein modification; protein glycosylation. Its function is as follows. Transfers mannose from GDP-mannose to dolichol monophosphate to form dolichol phosphate mannose (Dol-P-Man) which is the mannosyl donor in pathways leading to N-glycosylation, glycosyl phosphatidylinositol membrane anchoring, and O-mannosylation of proteins; catalytic subunit of the dolichol-phosphate mannose (DPM) synthase complex. The sequence is that of Dolichol-phosphate mannosyltransferase subunit 1 (DPM1) from Bos taurus (Bovine).